Reading from the N-terminus, the 177-residue chain is Phycoerythrin beta subunit (177 aa).

(2R,3E)-phycocyanobilin is bound by residues Tyr18, Lys28, Asn35, and Asp39. 15,16-dihydrobiliverdin is bound by residues Cys50, Asp54, and Cys61. (2R,3E)-phycocyanobilin-binding residues include Arg77, Cys82, Arg84, and Asp85. Positions 129, 148, and 149 each coordinate 15,16-dihydrobiliverdin. The (2R,3E)-phycocyanobilin site is built by Pro154, Gly156, and Cys158.

It belongs to the phycobiliprotein family. Heterotetramer of 2 identical alpha chains and 2 identical beta chains which form 2 alpha-beta heterodimers within the heterotetramer. The two alpha-beta heterodimers are rotated to an open configuration in contrast to the closed configuration found in other cryptophyte species due to the insertion of a single amino acid, 'Asp-65', in a conserved region of the alpha chain. In the open form, the central chromophores are not in physical contact but are separated by a water-filled channel. Post-translationally, contains three phycocyanobilin chromophores and one 15,16-dihydrobiliverdin chromophore with binding of the phycocyanobilin chromophores mediated by both the alpha and beta subunits.

The protein localises to the plastid. It localises to the chloroplast thylakoid membrane. Functionally, light-harvesting photosynthetic bile pigment-protein from the phycobiliprotein complex. The chain is Phycoerythrin beta subunit from Hemiselmis virescens.